A 116-amino-acid chain; its full sequence is Large ribosomal subunit protein bL17 (116 aa).

This sequence belongs to the bacterial ribosomal protein bL17 family. As to quaternary structure, part of the 50S ribosomal subunit. Contacts protein L32.

The chain is Large ribosomal subunit protein bL17 from Trichormus variabilis (strain ATCC 29413 / PCC 7937) (Anabaena variabilis).